The following is a 422-amino-acid chain: Glucose-1-phosphate adenylyltransferase 2 (422 aa).

Residues tyrosine 110, glycine 175, glutamate 190–lysine 191, and serine 208 contribute to the alpha-D-glucose 1-phosphate site.

This sequence belongs to the bacterial/plant glucose-1-phosphate adenylyltransferase family. As to quaternary structure, homotetramer.

The enzyme catalyses alpha-D-glucose 1-phosphate + ATP + H(+) = ADP-alpha-D-glucose + diphosphate. It participates in glycan biosynthesis; glycogen biosynthesis. Its function is as follows. Involved in the biosynthesis of ADP-glucose, a building block required for the elongation reactions to produce glycogen. Catalyzes the reaction between ATP and alpha-D-glucose 1-phosphate (G1P) to produce pyrophosphate and ADP-Glc. The sequence is that of Glucose-1-phosphate adenylyltransferase 2 from Alkalilimnicola ehrlichii (strain ATCC BAA-1101 / DSM 17681 / MLHE-1).